A 445-amino-acid polypeptide reads, in one-letter code: 6-phosphogluconate dehydrogenase, decarboxylating (445 aa).

NADP(+) contacts are provided by residues Ala-1–Gly-4, Asn-22–Ser-24, Val-63–Ala-65, and Asn-91. Substrate-binding positions include Asn-91 and Ser-117–Gly-119. The active-site Proton acceptor is the Lys-172. His-175–Asn-176 is a substrate binding site. Glu-179 serves as the catalytic Proton donor. 5 residues coordinate substrate: Tyr-180, Lys-249, Arg-276, Arg-434, and His-440.

The protein belongs to the 6-phosphogluconate dehydrogenase family. In terms of assembly, homodimer.

The enzyme catalyses 6-phospho-D-gluconate + NADP(+) = D-ribulose 5-phosphate + CO2 + NADPH. Its pathway is carbohydrate degradation; pentose phosphate pathway; D-ribulose 5-phosphate from D-glucose 6-phosphate (oxidative stage): step 3/3. Catalyzes the oxidative decarboxylation of 6-phosphogluconate to ribulose 5-phosphate and CO(2), with concomitant reduction of NADP to NADPH. This chain is 6-phosphogluconate dehydrogenase, decarboxylating (gnd), found in Citrobacter amalonaticus.